The chain runs to 667 residues: Probable E3 ubiquitin ligase complex SCF subunit sconB (667 aa).

The disordered stretch occupies residues 1–55; sequence MNGSGSTAKESLFNPTPRKLGLPEDNTMTPYNGVRSIFDNSSGSRQLTDEHTNQE. One can recognise an F-box domain in the interval 182 to 228; it reads IDFITALPPEISFKILSYLDTASLCRAAQVSRAWKCLADDDVVWHRM. WD repeat units lie at residues 347-386, 388-426, 428-464, 466-507, 549-593, 594-633, and 636-667; these read GHTNGVMCLQFEDNILATGSYDMTIKIWDMETGEELRTLT, HTSGIRCLQFDDTKLISGSIDRTLKVWNWRTGECISTYT, HLGGIIGLHFENSVLASGSIDNTVKIWNFEDKSTFLL, GHSD…RTFQ, RQEP…CLRT, FFGHLEGVWALSADTLRIVSGAEDRMVKIWDPRTGKCERT, and GHSGPVTCVGLGDSCFVTGSEDCEVRIHSFKN. Positions 528–562 are disordered; the sequence is DHDAGHEEDSNASVSGDESPLRQEPCSPGASFFEG.

This sequence belongs to the WD repeat MET30/SCONB/SCON-2 family. In terms of assembly, component of the SCF(sconB) E3 ubiquitin ligase complex.

It functions in the pathway protein modification; protein ubiquitination. Its function is as follows. Component of the SCF(sconB) E3 ubiquitin ligase complex involved in the regulation of sulfur metabolite repression, probably by mediating the inactivation or degradation of the metR transcription factor. The sequence is that of Probable E3 ubiquitin ligase complex SCF subunit sconB (sconB) from Talaromyces stipitatus (strain ATCC 10500 / CBS 375.48 / QM 6759 / NRRL 1006) (Penicillium stipitatum).